The sequence spans 41 residues: uncharacterized protein (41 aa).

Its subcellular location is the plastid. The protein resides in the chloroplast. This is an uncharacterized protein from Trieres chinensis (Marine centric diatom).